Reading from the N-terminus, the 504-residue chain is MDKFQGYLEFDGVRQQSFLYPLFFREYIYVLAYDHGLNRLNRNRSIFLENTDYDKKYSSLIVKRLILRMYEQNRLIIPTKDLNQNSFLGHTSLFYYQMISVLFAVIVEIPFSLRLGSSFQGKQLKKSYNLQSIHSIFPFLEDKLAHFNYVLDVLIPYPIHLEILVQTLRYRVKDASSLHXFRFCLYEYCNWKNFYKKKKPILNPRFFLFLYNSHVCEYESIFFFLRKRSSHLRSTSYEVLFERILFYGKIQHFLKVFVNNFPAILGLLKDPFIHYVRYHGRCILATKDTPLLMNKWKYYFVNLWQCYFSVWFQSHKVNINKLSKDNLEFLGYLSSLRLNPLVVRSQMLENSFLIDNVRIKLDSKIPISSIIGSLAKDKFCNVLGHPISKATWTDSSDSDILNRFVRICRNISHYYSGSSKKKNLYRIKYILRLCCVKTLARKHKSTVRAFLKRLGSGLLEEFLTGEDQVLSLIFPRSYYASKRLYRVRIWYLDILYLNDLVNHE.

This sequence belongs to the intron maturase 2 family. MatK subfamily.

It localises to the plastid. The protein resides in the chloroplast. In terms of biological role, usually encoded in the trnK tRNA gene intron. Probably assists in splicing its own and other chloroplast group II introns. This is Maturase K from Turritis glabra (Tower mustard).